The chain runs to 221 residues: uncharacterized protein (221 aa).

An N-terminal signal peptide occupies residues 1–26 (MVRLVPRAFAATVALLAAGFSPATAS).

This is an uncharacterized protein from Mycobacterium tuberculosis (strain ATCC 25618 / H37Rv).